A 337-amino-acid chain; its full sequence is MRDMEMRWAAPAPAARGRGRARRRAPDQPSFSSTLLDAICDSMDEGGEDGRTRNAASAAAKKRQEAANSYHYYYCYKPSLAASYRAAPALGSTADCPGRGYFSSSEVEYSLRRLRPIRTSAAGGAGDGAAVARKQRHEQPDVEKTAKTKPGSASARACRRPASPGARLASLLNSIFSGKRPSAQRPACSPDYPEPACSTAPPSSSSSYARRPCHAKTPRTPPTTTTTARARPSRSRTVRFLDIDGKVAVAAAVAGCRRIPVMEVEADTDDGGEESSDASSDLFELDSLAAIAPAGGRDGSYGDELPVYGTTGVGIRRDIGRRRPYGHAPCRSWSRAV.

3 disordered regions span residues 1 to 32, 120 to 163, and 179 to 235; these read MRDM…PSFS, SAAG…RPAS, and KRPS…PSRS. A compositionally biased stretch (basic and acidic residues) spans 137-146; that stretch reads HEQPDVEKTA. Composition is skewed to low complexity over residues 150–163 and 195–209; these read PGSA…RPAS and PACS…SSYA.

It belongs to the BIG GRAIN 1 (BG1) plant protein family.

The protein localises to the cell membrane. Its function is as follows. Involved in auxin transport. Regulator of the auxin signaling pathway. The protein is Protein BIG GRAIN 1-like of Oryza sativa subsp. japonica (Rice).